The primary structure comprises 908 residues: MATIHVDGKEYEVNGADNLLEACLSLGLDIPYFCWHPALGSVGACRQCAVKQYQNAEDTRGRLVMSCMTPASDGTFISIDDEEAKQFRESVVEWLMTNHPHDCPVCEEGGNCHLQDMTVMTGHSFRRYRFTKRTHRNQDLGPFISHEMNRCIACYRCVRYYKDYADGTDLGVYGAHDNVYFGRPEDGTLESEFSGNLVEICPTGVFTDKTHSERYNRKWDMQFAPSICQQCSIGCNISPGERYGELRRIENRYNGTVNHYFLCDRGRFGYGYVNLKDRPRQPVQRRGDDFITLNAEQAMQGAADILRQSKKVIGIGSPRASVESNFALRELVGEENFYTGIAHGEQERLQLALKVLREGGIYTPALREIESYDAVLVLGEDVTQTGARVALAVRQAVKGKAREMAAAQKVADWQIAAILNIGQRAKHPLFVTNVDDTRLDDIAAWTYRAPVEDQARLGFAIAHALDNSAPAVDGIEPELQNKIDVIVQALAGAKKPLIISGTNAGSIEVIQAAANVAKALKGRGADVGITMIARSVNSMGLGIMGGGSLEEALTELETGRADAVVVLENDLHRYASATRVNAALAKAPLVMVVDHQRTAIMENAHLVLSSASFAESDGTVINNEGRAQRFFQVYDPAYYDSKTVMLESWRWLHSLHSTLLSREVDWTQLDHVIDAVVAKIPELAGIKDAAPDATFRIRGQKLAREPHRYSGRTAMRANISVHEPRQPQDIDTMFTFSMEGNNQPTAHRSQVPFAWAPGWNSPQAWNKFQDEVGGKLRFGDPGVRLFETSENGLDYFTSVPARFQPQDGKWRIAPYYHLFGSDELSQRAPVFQSRMPQPYIKLNPADAAKLGVNAGTRVSFSYDGNTVTLPVEIAEGLTAGQVGLPMGMSGIAPVLAGAHLEDLKEAQQ.

The 2Fe-2S ferredoxin-type domain occupies A2–E83. Residues C34, C45, C48, and C67 each coordinate [2Fe-2S] cluster. A 4Fe-4S His(Cys)3-ligated-type domain is found at E83 to G122. [4Fe-4S] cluster contacts are provided by H99, C103, C106, C112, C151, C154, C157, C201, C228, C231, C235, and C263. The 4Fe-4S Mo/W bis-MGD-type domain occupies M221–D277.

It belongs to the complex I 75 kDa subunit family. In terms of assembly, composed of 13 different subunits. Subunits NuoCD, E, F, and G constitute the peripheral sector of the complex. [2Fe-2S] cluster is required as a cofactor. Requires [4Fe-4S] cluster as cofactor.

It catalyses the reaction a quinone + NADH + 5 H(+)(in) = a quinol + NAD(+) + 4 H(+)(out). NDH-1 shuttles electrons from NADH, via FMN and iron-sulfur (Fe-S) centers, to quinones in the respiratory chain. The immediate electron acceptor for the enzyme in this species is believed to be ubiquinone. Couples the redox reaction to proton translocation (for every two electrons transferred, four hydrogen ions are translocated across the cytoplasmic membrane), and thus conserves the redox energy in a proton gradient. This is NADH-quinone oxidoreductase subunit G (nuoG) from Shigella flexneri.